The following is a 979-amino-acid chain: UPF0182 protein Mb0065 (979 aa).

7 helical membrane passes run 19–41 (LVTA…DIYV), 63–85 (LAIV…LLAY), 114–136 (LFGW…FDWV), 174–196 (WLFV…FGGL), 208–230 (AARV…AYWL), 261–280 (LVLV…AIFL), and 285–307 (IPAM…WPLL). The disordered stretch occupies residues 898-948 (GTGRVATAPGGDAASAPPPGAGGPAPPQAVPPPRTTQPPAAPPRGPDVPPA). Positions 902-912 (VATAPGGDAAS) are enriched in low complexity. Residues 913-946 (APPPGAGGPAPPQAVPPPRTTQPPAAPPRGPDVP) are compositionally biased toward pro residues.

The protein belongs to the UPF0182 family.

It localises to the cell membrane. This Mycobacterium bovis (strain ATCC BAA-935 / AF2122/97) protein is UPF0182 protein Mb0065.